Consider the following 192-residue polypeptide: Late embryogenesis abundant protein 47 (192 aa).

Positions glutamine 5–proline 9 match the Nuclear localization signal (NLS) motif. 2 consecutive SMP domains span residues isoleucine 68 to arginine 125 and threonine 133 to glutamine 190. Residues leucine 146–tyrosine 174 are disordered. The span at proline 147 to glutamate 158 shows a compositional bias: basic and acidic residues.

Belongs to the LEA type SMP family.

The protein localises to the cytoplasm. It is found in the nucleus. LEA proteins are late embryonic proteins abundant in higher plant seed embryos. The function of those proteins is not known. This is Late embryogenesis abundant protein 47 from Arabidopsis thaliana (Mouse-ear cress).